We begin with the raw amino-acid sequence, 896 residues long: Sodium/hydrogen exchanger 5 (896 aa).

Residues 1–45 lie on the Cytoplasmic side of the membrane; the sequence is MLRAALSLLALPLAGAAEEPTQKPESPGEPPPGLELFRWQWHEVE. The helical transmembrane segment at 46–66 threads the bilayer; sequence APYLVALWILVASLAKIVFHL. At 67-73 the chain is on the extracellular side; sequence SRKVTSL. A helical membrane pass occupies residues 74–94; it reads VPESCLLILLGLVLGGIVLAV. Residues 95-103 lie on the Cytoplasmic side of the membrane; that stretch reads AKKAEYQLE. A helical membrane pass occupies residues 104–124; the sequence is PGTFFLFLLPPIVLDSGYFMP. Residues 125 to 134 lie on the Extracellular side of the membrane; that stretch reads SRLFFDNLGA. A helical transmembrane segment spans residues 135–155; sequence ILTYAVVGTLWNAFTTGAALW. Residues 156–173 lie on the Cytoplasmic side of the membrane; that stretch reads GLQQAGLVAPRVQAGLLD. Residues 174–194 form a helical membrane-spanning segment; that stretch reads FLLFGSLISAVDPVAVLAVFE. Residues 195 to 200 lie on the Extracellular side of the membrane; the sequence is EVHVNE. A glycan (N-linked (GlcNAc...) asparagine) is linked at asparagine 199. A helical membrane pass occupies residues 201–221; the sequence is TLFIIVFGESLLNDAVTVVLY. At 222-246 the chain is on the cytoplasmic side; sequence KVCNSFVEMGSANVQATDYLKGVAS. A helical membrane pass occupies residues 247-267; sequence LFVVSLGGAAVGLVFAFLLAL. The Extracellular segment spans residues 268–276; it reads TTRFTKRVR. The helical transmembrane segment at 277 to 297 threads the bilayer; that stretch reads IIEPLLVFLLAYAAYLTAEMA. Residues 298–331 lie on the Cytoplasmic side of the membrane; sequence SLSAILAVTMCGLGCKKYVEANISHKSRTTVKYT. The helical transmembrane segment at 332 to 352 threads the bilayer; sequence MKTLASCAETVIFMLLGISAV. Residues 353–360 lie on the Extracellular side of the membrane; that stretch reads DSSKWAWD. A helical membrane pass occupies residues 361 to 381; that stretch reads SGLVLGTLIFILFFRALGVVL. Topologically, residues 382-398 are cytoplasmic; that stretch reads QTWVLNQFRLVPLDKID. A helical transmembrane segment spans residues 399–419; that stretch reads QVVMSYGGLRGAVAFALVILL. The Extracellular segment spans residues 420-428; it reads DRTKVPAKD. The helical transmembrane segment at 429-449 threads the bilayer; that stretch reads YFVATTIVVVFFTVIVQGLTI. At 450–896 the chain is on the cytoplasmic side; the sequence is KPLVKWLKVK…CIQFNRGSRL (447 aa). Residues 576–721 are required for interaction with ARRB2; it reads GSGACLDLQV…SETEKEDDEG (146 aa). 3 disordered regions span residues 658 to 686, 701 to 720, and 818 to 864; these read TKSK…GKHR, ESEE…EDDE, and HPRG…QQQE. A compositionally biased stretch (basic residues) spans 660-672; that stretch reads SKPRPRKTGRRKK. Residues 854–864 are compositionally biased toward polar residues; that stretch reads ESSADLPQQQE.

The protein belongs to the monovalent cation:proton antiporter 1 (CPA1) transporter (TC 2.A.36) family. Interacts with CHP1 and CHP2. Interacts with ARRB2; facilitates the endocytosis of SLC9A5 from the plasma membrane. Interacts with RACK1; this interaction positively regulates SLC9A5 activity and promotes SLC9A5 localization to focal adhesions. Interacts with SCAMP2; this interaction regulates SLC9A5 cell-surface targeting and SLC9A5 activity. Phosphorylated by PRKAA2; promotes its accumulation at the cell surface. Phosphorylated by CSNK2A1 in a manner favoring its beta-arrestin binding and endocytosis. In terms of tissue distribution, mainly expressed in brain. Expressed in neurons of the central and peripheral nervous system. Expressed also in testis, spleen, and skeletal muscle.

The protein localises to the cell membrane. Its subcellular location is the recycling endosome membrane. It is found in the cell projection. The protein resides in the dendritic spine membrane. It localises to the synaptic cell membrane. The protein localises to the cell junction. Its subcellular location is the focal adhesion. The catalysed reaction is Na(+)(in) + H(+)(out) = Na(+)(out) + H(+)(in). Its activity is regulated as follows. ATP-depletion almost completely abolishes SLC9A5 activity. Inhibited by amiloride compounds. Plasma membrane Na(+)/H(+) antiporter. Mediates the electroneutral exchange of intracellular H(+) ions for extracellular Na(+) in 1:1 stoichiometry, thus regulating intracellular pH homeostasis, in particular in neural tissues. Acts as a negative regulator of dendritic spine growth. Plays a role in postsynaptic remodeling and signaling. Can also contribute to organellar pH regulation, with consequences for receptor tyrosine kinase trafficking. This Homo sapiens (Human) protein is Sodium/hydrogen exchanger 5.